A 366-amino-acid polypeptide reads, in one-letter code: tRNA/tmRNA (uracil-C(5))-methyltransferase (366 aa).

Gln190, Tyr218, Asn223, Glu239, and Asp299 together coordinate S-adenosyl-L-methionine. The Nucleophile role is filled by Cys324. Glu358 acts as the Proton acceptor in catalysis.

The protein belongs to the class I-like SAM-binding methyltransferase superfamily. RNA M5U methyltransferase family. TrmA subfamily.

It catalyses the reaction uridine(54) in tRNA + S-adenosyl-L-methionine = 5-methyluridine(54) in tRNA + S-adenosyl-L-homocysteine + H(+). It carries out the reaction uridine(341) in tmRNA + S-adenosyl-L-methionine = 5-methyluridine(341) in tmRNA + S-adenosyl-L-homocysteine + H(+). Functionally, dual-specificity methyltransferase that catalyzes the formation of 5-methyluridine at position 54 (m5U54) in all tRNAs, and that of position 341 (m5U341) in tmRNA (transfer-mRNA). The chain is tRNA/tmRNA (uracil-C(5))-methyltransferase from Salmonella agona (strain SL483).